The sequence spans 1141 residues: PR domain zinc finger protein 15 (1141 aa).

The SET domain maps to Pro-49 to Ala-159. The segment at Trp-197–His-219 adopts a C2H2-type 1 zinc-finger fold. The segment at Lys-224–Ile-283 is disordered. Basic and acidic residues predominate over residues Ala-236–Arg-245. Residues Gln-262–Val-274 are compositionally biased toward basic residues. 4 consecutive C2H2-type zinc fingers follow at residues Tyr-372–His-394, Phe-399–His-422, Phe-460–His-482, and Phe-487–His-509. Lys-517 is covalently cross-linked (Glycyl lysine isopeptide (Lys-Gly) (interchain with G-Cter in SUMO2)). 2 C2H2-type zinc fingers span residues Ser-536–His-558 and Tyr-563–His-585. Positions Ile-604–Pro-623 are disordered. A compositionally biased stretch (acidic residues) spans Glu-609–Asp-620. 9 consecutive C2H2-type zinc fingers follow at residues Tyr-626–His-649, Tyr-654–His-676, His-690–His-712, His-718–His-740, Tyr-746–His-768, Tyr-774–His-796, Phe-802–His-824, Trp-830–His-853, and Gln-859–His-882. Disordered stretches follow at residues Ala-922–Asn-973 and Gln-1108–Tyr-1141. The span at Gly-927–Gln-938 shows a compositional bias: basic residues. The segment covering Pro-1121–Tyr-1141 has biased composition (low complexity).

The protein belongs to the class V-like SAM-binding methyltransferase superfamily. As to expression, detected in all tissues examined.

The protein resides in the nucleus. Sequence-specific DNA-binding transcriptional regulator. Plays a role as a molecular node in a transcriptional network regulating embryonic development and cell fate decision. Stimulates the expression of upstream key transcriptional activators and repressors of the Wnt/beta-catenin and MAPK/ERK pathways, respectively, that are essential for naive pluripotency and self-renewal maintenance of embryonic stem cells (ESCs). Specifically promotes SPRY1 and RSPO1 transcription activation through recognition and direct binding of a specific DNA sequence in their promoter regions. Involved in early embryo development. Also plays a role in induced pluripotent stem cells (iPSCs) reprogramming. The sequence is that of PR domain zinc finger protein 15 from Homo sapiens (Human).